A 305-amino-acid polypeptide reads, in one-letter code: Ribonuclease BN (305 aa).

Zn(2+) contacts are provided by H64, H66, D68, H69, H141, D212, and H270. Residue D68 is the Proton acceptor of the active site.

Belongs to the RNase Z family. RNase BN subfamily. In terms of assembly, homodimer. It depends on Zn(2+) as a cofactor.

Zinc phosphodiesterase, which has both exoribonuclease and endoribonuclease activities. This chain is Ribonuclease BN, found in Shigella flexneri.